We begin with the raw amino-acid sequence, 906 residues long: Coatomer subunit beta' (906 aa).

8 WD repeats span residues 13–52, 55–94, 97–136, 140–180, 183–224, 227–266, 350–388, and 390–425; these read ARSD…LVKT, VCDL…RVHM, AHSD…SCSQ, GHTH…PNFT, GHEK…CVQT, GHAQ…LEST, SCEI…NKSF, and SAQE…KSFK. K627 carries the post-translational modification N6-acetyllysine. The stretch at 746–783 is one WD 9 repeat; the sequence is IRTGRLPEAAFLARTYLPSQVSRVVKLWRENLSKVNQK. Residues 837–872 are disordered; that stretch reads EEAKGFQPSRSAAQQELDGKPASPTPVIVTSQTANK. A Phosphoserine modification is found at S859. T861 carries the post-translational modification Phosphothreonine. The stretch at 866–891 forms a coiled coil; sequence TSQTANKEEKSLLELEVDLDNLEIED.

This sequence belongs to the WD repeat COPB2 family. As to quaternary structure, oligomeric complex that consists of at least the alpha, beta, beta', gamma, delta, epsilon and zeta subunits. Probably interacts with PEX11A. Interacts with SCYL1. Interacts with JAGN1.

Its subcellular location is the cytoplasm. It localises to the cytosol. The protein localises to the golgi apparatus membrane. The protein resides in the cytoplasmic vesicle. It is found in the COPI-coated vesicle membrane. Functionally, the coatomer is a cytosolic protein complex that binds to dilysine motifs and reversibly associates with Golgi non-clathrin-coated vesicles, which further mediate biosynthetic protein transport from the ER, via the Golgi up to the trans Golgi network. Coatomer complex is required for budding from Golgi membranes, and is essential for the retrograde Golgi-to-ER transport of dilysine-tagged proteins. In mammals, the coatomer can only be recruited by membranes associated to ADP-ribosylation factors (ARFs), which are small GTP-binding proteins; the complex also influences the Golgi structural integrity, as well as the processing, activity, and endocytic recycling of LDL receptors. This coatomer complex protein, essential for Golgi budding and vesicular trafficking, is a selective binding protein (RACK) for protein kinase C, epsilon type. It binds to Golgi membranes in a GTP-dependent manner. In Bos taurus (Bovine), this protein is Coatomer subunit beta' (COPB2).